Reading from the N-terminus, the 1773-residue chain is Plexin-2 (1773 aa).

The first 19 residues, 1–19 (MLFIESAFLVLTSLSAAEA), serve as a signal peptide directing secretion. Positions 20 to 436 (ATPFEGGVKQ…MPYGIVMEEL (417 aa)) constitute a Sema domain. Over 20–1130 (ATPFEGGVKQ…SDHALPSRLS (1111 aa)) the chain is Extracellular. An N-linked (GlcNAc...) asparagine glycan is attached at Asn-65. 9 disulfides stabilise this stretch: Cys-83-Cys-90, Cys-117-Cys-125, Cys-239-Cys-341, Cys-255-Cys-292, Cys-310-Cys-328, Cys-439-Cys-456, Cys-445-Cys-479, Cys-448-Cys-465, and Cys-459-Cys-471. Asn-241 is a glycosylation site (N-linked (GlcNAc...) asparagine). Positions 438-480 (TCAHHESCTDCQVSVDPLCQWCHPTQSCTTSSRCSGPLTTQCP) constitute a PSI 1 domain. An N-linked (GlcNAc...) asparagine glycan is attached at Asn-494. A disulfide bond links Cys-516 and Cys-538. Asn-566 carries N-linked (GlcNAc...) asparagine glycosylation. A PSI 2 domain is found at 571-608 (DCAGYSTCSTCMSSEFGCQWCSHKCSSSCGSASAKACV). 2 N-linked (GlcNAc...) asparagine glycosylation sites follow: Asn-670 and Asn-693. Residues 698–739 (SCSNLAADCSSCLALSPSLSCGWCNRKCSHECHESKATAVCD) form the PSI 3 domain. IPT/TIG domains lie at 741-829 (PKID…FSFV), 831-916 (VSIF…FEYR), and 919-1006 (PSVN…FLMD). Asn-855, Asn-877, Asn-975, and Asn-1007 each carry an N-linked (GlcNAc...) asparagine glycan. Residues 1131-1151 (FLILGLLLFTVITLIVMCLIF) traverse the membrane as a helical segment. Positions 1150-1188 (IFKRRRQEREKEYRKIQLQMENLENNVRKECKQAFAELQ) form a coiled coil. Residues 1152-1764 (KRRRQEREKE…LHVCLETDNH (613 aa)) lie on the Cytoplasmic side of the membrane.

Belongs to the plexin family. In terms of assembly, interacts with mab-20.

The protein localises to the cell membrane. Its function is as follows. Involved as a receptor for mab-20/sema-2a in the formation or stabilization of cell-cell contacts at several stages of epithelial morphogenesis. In early embryonic development, required for proper ventral closure of the epidermis. During male tail morphogenesis, involved in precursor cell sorting and in the formation of distinct sensory rays. Involved in axon guidance of SDQL neurons during neurogenesis. In Caenorhabditis briggsae, this protein is Plexin-2 (plx-2).